Here is a 299-residue protein sequence, read N- to C-terminus: Urease accessory protein UreD (299 aa).

It belongs to the UreD family. As to quaternary structure, ureD, UreF and UreG form a complex that acts as a GTP-hydrolysis-dependent molecular chaperone, activating the urease apoprotein by helping to assemble the nickel containing metallocenter of UreC. The UreE protein probably delivers the nickel.

Its subcellular location is the cytoplasm. Functionally, required for maturation of urease via the functional incorporation of the urease nickel metallocenter. The polypeptide is Urease accessory protein UreD (Haloarcula marismortui (strain ATCC 43049 / DSM 3752 / JCM 8966 / VKM B-1809) (Halobacterium marismortui)).